Consider the following 383-residue polypeptide: MGRIAKYYREYGIRIVKGFMQYVWDDKGQRYIDCNTNHGVVFLGHANPKIVEAVKKQVEEIWAVPLNFATPARERFIEEFSKLLPPKFGVVFLQNTGTEAVEVAIKIAKKVTRKPTIVAFTNSFHGRTMGSLSITWNEKYKKAFEPLYPHVRFGKFNVPHEVDKLIGEDTCCVVVEPIQGEGGVNPATPEFLKALREEAQRKGALLIFDEVQTGFGRTGAVWAFQKYGVEPDIFTAGKPVAGGLPIGLAVAREDFGDVFEPGEHGSTFAGNAVVMAAAAAASRLLREEDVPGRAERIGAELAKALGDTGSRLAVRVKGMGLMLGLELRVKADQFIQPLLERGVMALTAGVNTLRFLPPYMISKEDVEVVHAAVTEVLKKAEQQ.

Pyridoxal 5'-phosphate-binding positions include 97–98 (GT) and Phe124. Arg127 is a binding site for substrate. Residue 209–212 (DEVQ) participates in pyridoxal 5'-phosphate binding. Lys238 is subject to N6-(pyridoxal phosphate)lysine. Substrate is bound at residue Ser266. Thr267 is a binding site for pyridoxal 5'-phosphate.

It belongs to the class-III pyridoxal-phosphate-dependent aminotransferase family. LysJ subfamily. In terms of assembly, homodimer. Pyridoxal 5'-phosphate is required as a cofactor.

Its subcellular location is the cytoplasm. It carries out the reaction [amino-group carrier protein]-C-terminal-gamma-(L-lysyl)-L-glutamate + 2-oxoglutarate = [amino-group carrier protein]-C-terminal-N-(1-carboxy-5-oxopentan-1-yl)-L-glutamine + L-glutamate. It catalyses the reaction [amino-group carrier protein]-C-terminal-gamma-(L-ornithyl)-L-glutamate + 2-oxoglutarate = [amino-group carrier protein]-C-terminal-gamma-(L-glutamyl-5-semialdehyde)-L-glutamate + L-glutamate. It functions in the pathway amino-acid biosynthesis; L-lysine biosynthesis via AAA pathway; L-lysine from L-alpha-aminoadipate (Thermus route): step 4/5. It participates in amino-acid biosynthesis; L-arginine biosynthesis. In terms of biological role, involved in both the arginine and lysine biosynthetic pathways. The polypeptide is Putative [LysW]-aminoadipate semialdehyde/glutamate semialdehyde transaminase (Pyrobaculum aerophilum (strain ATCC 51768 / DSM 7523 / JCM 9630 / CIP 104966 / NBRC 100827 / IM2)).